Consider the following 550-residue polypeptide: Leucine-rich repeat LGI family member 2 (550 aa).

A signal peptide spans 1–25 (MALWRGGGALGLLLLSAACLIPPSA). Positions 26-62 (QVRRLARCPATCSCTKESIICVGSSWVPRIVPGDISS) constitute an LRRNT domain. Asn67 is a glycosylation site (N-linked (GlcNAc...) asparagine). LRR repeat units lie at residues 83–104 (SLQL…AFAG) and 107–128 (HLEY…AFRG). The region spanning 140 to 190 (NKFECDCKAKWLYLWLKMTNSTVSDVLCIGPPEYQEKKLNEVTSFDYECTT) is the LRRCT domain. An N-linked (GlcNAc...) asparagine glycan is attached at Asn159. EAR repeat units follow at residues 224-266 (DFVV…EWDH), 270-312 (NFRS…KYDE), 316-363 (KFVK…KWNS), 365-408 (GFYS…QWNK), 412-455 (KFVP…RWNS), 457-499 (QFVE…QWDK), and 503-545 (QFKK…EHII). Asn276 carries an N-linked (GlcNAc...) asparagine glycan. N-linked (GlcNAc...) asparagine glycosylation is present at Asn407.

Brain.

It is found in the secreted. In terms of biological role, required for the development of soma-targeting inhibitory GABAergic synapses made by parvalbumin-positive basket cells. The protein is Leucine-rich repeat LGI family member 2 (Lgi2) of Mus musculus (Mouse).